A 239-amino-acid polypeptide reads, in one-letter code: O-methyltransferase ankF (239 aa).

S-adenosyl-L-methionine is bound by residues glutamate 71, 73-74, serine 79, glutamate 98, and alanine 127; that span reads GT.

Belongs to the class I-like SAM-binding methyltransferase superfamily. Cation-dependent O-methyltransferase family.

The enzyme catalyses NK13650 B + S-adenosyl-L-methionine = NK13650 D + S-adenosyl-L-homocysteine + H(+). It participates in secondary metabolite biosynthesis. In terms of biological role, O-methyltransferase; part of the ank cluster that mediates the biosynthesis of NK13650 C, a highly modified cyclo-arginine-tyrosine dipeptide. AnkF converts NK13650 B to produce NK13650 D via methylation of the C-17 phenol group. Within the pathway, the cyclodipeptide synthase ankA acts as the scaffold-generating enzyme and is responsible for formation of the cyclo-Arg-Tyr diketopiperazine (cRY) from L-Arg and L-Tyr. The ankA product cRY is desaturated by the cytochrome P450 monooxygenase ankB to yield a dehydro-cyclodipeptide intermediate. The FAD-dependent monooxygenase ankC then installs the m-OH, ankD catalyzes the attachment of L-homoserine, and ankE ligates citrate to the ankD product to yield NK13650 B. The O-methyltransferase ankF is responsible for methylation of the C-17 phenol group of NK13650 B to produce NK13650 D. Amidation of NK13650 D with L-Asp by ankG then leads to the production of NK13650 C, whereas amidation of NK13650 B produces NK13650 A. This Aspergillus thermomutatus (Neosartorya pseudofischeri) protein is O-methyltransferase ankF.